The following is a 248-amino-acid chain: 14-3-3-like protein G-BOX factor 14 lambda (248 aa).

3 positions are modified to phosphoserine; by CRPK1: S70, S112, and S193. T214 is subject to Phosphothreonine; by CRPK1.

It belongs to the 14-3-3 family. As to quaternary structure, interacts with SERK1 in the cell membrane. Component of the SERK1 signaling complex, composed of KAPP, CDC48A, GRF6 or GRF7, SERK1, SERK2, SERK3/BAK1 and BRI1. Interacts with TPK1. Interacts with ADF1. Binds to CRPK1 at the plasma membrane. Interacts with DREB1A and DREB1B in the nucleus when activated by CRPK1-mediated phosphorylation upon freezing. Interacts with CINV1. Binds to the N-terminal region of B1L. Transphosphorylated by SERK1. Post-translationally, phosphorylated by CRPK1 in response to cold.

The protein localises to the nucleus. It localises to the cell membrane. Its subcellular location is the cytoplasm. Functionally, is associated with a DNA binding complex that binds to the G box, a well-characterized cis-acting DNA regulatory element found in plant genes. Specific negative regulator of slow-vacuolar (SV) ion channel. Mediates F-actin dynamics possibly through inhibiting ADF1 phosphorylation. Negative regulator of freezing tolerance that modulates cold-responsive C-repeat-binding factors (CBF) DREB1A and DREB1B proteins stability by facilitating their ubiquitin-mediated degradation when activated by CRPK1-mediated phosphorylation in freezing conditions; this processus is counteracted by B1L. This Arabidopsis thaliana (Mouse-ear cress) protein is 14-3-3-like protein G-BOX factor 14 lambda.